The primary structure comprises 91 residues: Islet amyloid polypeptide (91 aa).

The N-terminal stretch at 1–22 (MCLLQLPVVLLLLSAALNTLKA) is a signal peptide. The propeptide occupies 23–34 (TPIASDTDHRVD). Residues Cys38 and Cys43 are joined by a disulfide bond. Tyr73 bears the Tyrosine amide mark. Positions 77 to 91 (NAEVVDVELLHYLPL) are excised as a propeptide.

Belongs to the calcitonin family. In terms of assembly, can form homodimers. Interacts with IDE and INS. Interaction with INS inhibits homodimerization and fibril formation.

The protein localises to the secreted. Its function is as follows. Amylin/IAPP is a glucoregulatory peptide hormone that plays an important role in the regulation of energy homeostasis. Selectively inhibits insulin-stimulated glucose utilization and glycogen deposition in muscle, while not affecting adipocyte glucose metabolism. IAPP function is mediated by the CALCR-RAMPs (AMYRs) receptor complexes. Amylin can also bind CALCR receptor in the absence of RAMPs, although it is more selective for AMYRs. This chain is Islet amyloid polypeptide (IAPP), found in Octodon degus (Degu).